We begin with the raw amino-acid sequence, 461 residues long: Argininosuccinate lyase (461 aa).

Belongs to the lyase 1 family. Argininosuccinate lyase subfamily.

Its subcellular location is the cytoplasm. It carries out the reaction 2-(N(omega)-L-arginino)succinate = fumarate + L-arginine. It functions in the pathway amino-acid biosynthesis; L-arginine biosynthesis; L-arginine from L-ornithine and carbamoyl phosphate: step 3/3. The protein is Argininosuccinate lyase of Syntrophotalea carbinolica (strain DSM 2380 / NBRC 103641 / GraBd1) (Pelobacter carbinolicus).